Consider the following 192-residue polypeptide: Probable thymidylate kinase (192 aa).

8–15 (GIDGSGKS) is an ATP binding site.

This sequence belongs to the thymidylate kinase family.

It carries out the reaction dTMP + ATP = dTDP + ADP. The chain is Probable thymidylate kinase from Pyrobaculum aerophilum (strain ATCC 51768 / DSM 7523 / JCM 9630 / CIP 104966 / NBRC 100827 / IM2).